The primary structure comprises 469 residues: Glutamate--tRNA ligase 2 (469 aa).

Positions 10 to 20 (PSPTGYLHIGG) match the 'HIGH' region motif. Zn(2+) contacts are provided by Cys-99, Cys-101, Cys-126, and Asp-128. Residues 237 to 241 (RLSKR) carry the 'KMSKS' region motif. Residue Lys-240 participates in ATP binding.

Belongs to the class-I aminoacyl-tRNA synthetase family. Glutamate--tRNA ligase type 1 subfamily. Monomer. It depends on Zn(2+) as a cofactor.

Its subcellular location is the cytoplasm. It catalyses the reaction tRNA(Glu) + L-glutamate + ATP = L-glutamyl-tRNA(Glu) + AMP + diphosphate. In terms of biological role, catalyzes the attachment of glutamate to tRNA(Glu) in a two-step reaction: glutamate is first activated by ATP to form Glu-AMP and then transferred to the acceptor end of tRNA(Glu). This Coxiella burnetii (strain CbuG_Q212) (Coxiella burnetii (strain Q212)) protein is Glutamate--tRNA ligase 2.